We begin with the raw amino-acid sequence, 125 residues long: Large ribosomal subunit protein bL12 (125 aa).

This sequence belongs to the bacterial ribosomal protein bL12 family. In terms of assembly, homodimer. Part of the ribosomal stalk of the 50S ribosomal subunit. Forms a multimeric L10(L12)X complex, where L10 forms an elongated spine to which 2 to 4 L12 dimers bind in a sequential fashion. Binds GTP-bound translation factors.

Its function is as follows. Forms part of the ribosomal stalk which helps the ribosome interact with GTP-bound translation factors. Is thus essential for accurate translation. This Thioalkalivibrio sulfidiphilus (strain HL-EbGR7) protein is Large ribosomal subunit protein bL12.